We begin with the raw amino-acid sequence, 442 residues long: 2-oxoisovalerate dehydrogenase subunit alpha, mitochondrial (442 aa).

The transit peptide at 1–42 (MSAAKIWRPSRGLRQAALLLLGRSGVRGLARSHPSRQQQQQF) directs the protein to the mitochondrion. Residues 30–50 (ARSHPSRQQQQQFPSLDDKPQ) are disordered. Tyrosine 155 and arginine 156 together coordinate thiamine diphosphate. Serine 203 lines the K(+) pocket. Position 204 (serine 204) interacts with thiamine diphosphate. 3 residues coordinate K(+): proline 205, threonine 208, and glutamine 209. Mg(2+) is bound at residue glutamate 235. Residues glycine 236, alanine 237, and arginine 262 each coordinate thiamine diphosphate. Residues asparagine 264 and tyrosine 266 each contribute to the Mg(2+) site. Histidine 333 contacts thiamine diphosphate. Serine 334 carries the post-translational modification Phosphoserine; by BCKDK. Threonine 335 carries the phosphothreonine modification. Phosphoserine is present on residues serine 336 and serine 344. The residue at position 353 (lysine 353) is an N6-acetyllysine; alternate. An N6-succinyllysine; alternate modification is found at lysine 353. Lysine 377 carries the N6-succinyllysine modification.

This sequence belongs to the BCKDHA family. As to quaternary structure, heterotetramer of 2 alpha/BCKDHA and 2 beta chains/BCKDHB that forms the branched-chain alpha-keto acid decarboxylase (E1) component of the BCKD complex. The branched-chain alpha-ketoacid dehydrogenase is a large complex composed of three major building blocks E1, E2 and E3. It is organized around E2, a 24-meric cubic core composed of DBT, to which are associated 6 to 12 copies of E1, and approximately 6 copies of the dehydrogenase E3, a DLD dimer. Interacts with PPM1K. Thiamine diphosphate serves as cofactor. It depends on Mg(2+) as a cofactor. Phosphorylated at Ser-334 by BCKDK and dephosphorylated by protein phosphatase PPM1K.

The protein resides in the mitochondrion matrix. It carries out the reaction N(6)-[(R)-lipoyl]-L-lysyl-[protein] + 3-methyl-2-oxobutanoate + H(+) = N(6)-[(R)-S(8)-2-methylpropanoyldihydrolipoyl]-L-lysyl-[protein] + CO2. Its function is as follows. Together with BCKDHB forms the heterotetrameric E1 subunit of the mitochondrial branched-chain alpha-ketoacid dehydrogenase (BCKD) complex. The BCKD complex catalyzes the multi-step oxidative decarboxylation of alpha-ketoacids derived from the branched-chain amino-acids valine, leucine and isoleucine producing CO2 and acyl-CoA which is subsequently utilized to produce energy. The E1 subunit catalyzes the first step with the decarboxylation of the alpha-ketoacid forming an enzyme-product intermediate. A reductive acylation mediated by the lipoylamide cofactor of E2 extracts the acyl group from the E1 active site for the next step of the reaction. The protein is 2-oxoisovalerate dehydrogenase subunit alpha, mitochondrial of Mus musculus (Mouse).